Here is a 126-residue protein sequence, read N- to C-terminus: Small ribosomal subunit protein bS6 (126 aa).

The disordered stretch occupies residues L103–E126. Positions L115–E126 are enriched in acidic residues.

Belongs to the bacterial ribosomal protein bS6 family.

Its function is as follows. Binds together with bS18 to 16S ribosomal RNA. This is Small ribosomal subunit protein bS6 from Glaesserella parasuis serovar 5 (strain SH0165) (Haemophilus parasuis).